The following is a 557-amino-acid chain: Laccase-11 (557 aa).

The N-terminal stretch at 1-23 (MKMGFLFLFCYLLAFLGYSPVDA) is a signal peptide. 2 Plastocyanin-like domains span residues 31-147 (DVQV…PAPG) and 158-308 (ESNI…YKGV). Residues N36, N69, and N77 are each glycosylated (N-linked (GlcNAc...) asparagine). Cu cation contacts are provided by H81 and H83. N115 carries an N-linked (GlcNAc...) asparagine glycan. Cu cation contacts are provided by H126 and H128. N240, N296, N323, N371, N381, N398, N416, and N440 each carry an N-linked (GlcNAc...) asparagine glycan. The region spanning 406–541 (DFPDRPPKAF…KMAFVVENGE (136 aa)) is the Plastocyanin-like 3 domain. The Cu cation site is built by H458, H461, H463, H520, C521, H522, and H526.

Belongs to the multicopper oxidase family. The cofactor is Cu cation. Ubiquitous and constitutive.

It localises to the secreted. The protein localises to the extracellular space. Its subcellular location is the apoplast. The catalysed reaction is 4 hydroquinone + O2 = 4 benzosemiquinone + 2 H2O. Lignin degradation and detoxification of lignin-derived products. The polypeptide is Laccase-11 (LAC11) (Arabidopsis thaliana (Mouse-ear cress)).